A 180-amino-acid polypeptide reads, in one-letter code: Vacuolar ATPase assembly protein VMA22 (180 aa).

Residues 16–37 (QLLGDLEELEGKRTVLNARVEE) adopt a coiled-coil conformation. Residues 92 to 101 (EEVGPREAGL) are compositionally biased toward basic and acidic residues. Positions 92 to 122 (EEVGPREAGLRRRKGPTKTPEPESSEAPQDP) are disordered. Residues 153–176 (SLQNRIDWGRSQLRGLQEKLKQLE) adopt a coiled-coil conformation.

Accessory component of the multisubunit proton-transporting vacuolar (V)-ATPase protein pump. In terms of tissue distribution, expressed throughout the brain.

It is found in the endosome. The protein localises to the lysosome. Its subcellular location is the endoplasmic reticulum-Golgi intermediate compartment. It localises to the cytoplasmic vesicle. The protein resides in the COPI-coated vesicle. It is found in the endoplasmic reticulum. Its function is as follows. Accessory component of the proton-transporting vacuolar (V)-ATPase protein pump involved in intracellular iron homeostasis. In aerobic conditions, required for intracellular iron homeostasis, thus triggering the activity of Fe(2+) prolyl hydroxylase (PHD) enzymes, and leading to HIF1A hydroxylation and subsequent proteasomal degradation. Necessary for endolysosomal acidification and lysosomal degradation. May be involved in Golgi homeostasis. This chain is Vacuolar ATPase assembly protein VMA22, found in Homo sapiens (Human).